Consider the following 852-residue polypeptide: Taste receptor type 1 member 3 (852 aa).

An N-terminal signal peptide occupies residues 1–20; it reads MLGPAVLGLSLWALLHPGTG. At 21–570 the chain is on the extracellular side; that stretch reads APLCLSQQLR…FLAWGEPAVL (550 aa). 8 N-linked (GlcNAc...) asparagine glycosylation sites follow: Asn85, Asn130, Asn264, Asn285, Asn380, Asn411, Asn432, and Asn475. The segment at 536-545 is required for brazzein responsiveness; it reads IACTFCGQDE. A helical transmembrane segment spans residues 571 to 591; sequence LLLLLLSLALGLVLAALGLFV. Residues 592–603 lie on the Cytoplasmic side of the membrane; sequence HHRDSPLVQASG. A helical transmembrane segment spans residues 604-624; sequence GPLACFGLVCLGLVCLSVLLF. Over 625–639 the chain is Extracellular; that stretch reads PGQPSPARCLAQQPL. A helical transmembrane segment spans residues 640–660; sequence SHLPLTGCLSTLFLQAAEIFV. Topologically, residues 661–682 are cytoplasmic; it reads ESELPLSWADRLSGCLRGPWAW. The helical transmembrane segment at 683–703 threads the bilayer; it reads LVVLLAMLVEVALCTWYLVAF. The Extracellular portion of the chain corresponds to 704 to 729; sequence PPEVVTDWHMLPTEALVHCRTRSWVS. A helical membrane pass occupies residues 730 to 750; it reads FGLAHATNATLAFLCFLGTFL. Over 751 to 762 the chain is Cytoplasmic; it reads VRSQPGCYNRAR. A helical membrane pass occupies residues 763–783; the sequence is GLTFAMLAYFITWVSFVPLLA. Residues 784–789 are Extracellular-facing; it reads NVQVVL. The chain crosses the membrane as a helical span at residues 790-810; sequence RPAVQMGALLLCVLGILAAFH. Over 811–852 the chain is Cytoplasmic; the sequence is LPRCYLLMRQPGLNTPEFFLGGGPGDAQGQNDGNTGNQGKHE.

The protein belongs to the G-protein coupled receptor 3 family. TAS1R subfamily. In terms of assembly, forms homodimers or heterodimers with TAS1R1 and TAS1R2.

The protein localises to the cell membrane. In terms of biological role, putative taste receptor. TAS1R1/TAS1R3 responds to the umami taste stimulus (the taste of monosodium glutamate). TAS1R2/TAS1R3 recognizes diverse natural and synthetic sweeteners. TAS1R3 is essential for the recognition and response to the disaccharide trehalose. Sequence differences within and between species can significantly influence the selectivity and specificity of taste responses. This is Taste receptor type 1 member 3 (TAS1R3) from Homo sapiens (Human).